We begin with the raw amino-acid sequence, 109 residues long: Avian agnoprotein 2b (109 aa).

Residues 89–109 (QPALASRLTQPNRPNRGRLAK) are disordered.

It is found in the host cytoplasm. This chain is Avian agnoprotein 2b, found in Psittacidae (parrots).